We begin with the raw amino-acid sequence, 245 residues long: MDCLQMVFKLFPNWKREAEVKKLVAGYKVHGDPFSTNTRRVLAVLHEKRLSYEPITVKLQTGEHKTEPFLSLNPFGQVPVFEDGSVKLYESRAITQYIAYVHSSRGTQLLNLRSHETMATLTMWMEIEAHQFDPPASKLTWEQVIKPIYGLETDQTIVKENEAILEKVLNIYEKRLEESRFLACNSFTLVDLHHLPNIQYLLGTPTKKLFEKRSKVRKWVDEITSREAWKMACDQEKSWFNKPRN.

The region spanning 25-106 (AGYKVHGDPF…YIAYVHSSRG (82 aa)) is the GST N-terminal domain. Glutathione-binding positions include 35 to 36 (ST), 64 to 65 (HK), 77 to 78 (QV), and 90 to 91 (ES). Positions 114–244 (SHETMATLTM…QEKSWFNKPR (131 aa)) constitute a GST C-terminal domain.

Belongs to the GST superfamily. Phi family.

It localises to the cytoplasm. The protein resides in the cytosol. It carries out the reaction RX + glutathione = an S-substituted glutathione + a halide anion + H(+). May be involved in the conjugation of reduced glutathione to a wide number of exogenous and endogenous hydrophobic electrophiles and have a detoxification role against certain herbicides. This is Glutathione S-transferase F4 (GSTF4) from Arabidopsis thaliana (Mouse-ear cress).